We begin with the raw amino-acid sequence, 186 residues long: Ribosome-recycling factor (186 aa).

The protein belongs to the RRF family.

The protein localises to the cytoplasm. Its function is as follows. Responsible for the release of ribosomes from messenger RNA at the termination of protein biosynthesis. May increase the efficiency of translation by recycling ribosomes from one round of translation to another. The polypeptide is Ribosome-recycling factor (Bartonella quintana (strain Toulouse) (Rochalimaea quintana)).